The primary structure comprises 370 residues: Anhydro-N-acetylmuramic acid kinase (370 aa).

An ATP-binding site is contributed by G12–D19.

It belongs to the anhydro-N-acetylmuramic acid kinase family.

It catalyses the reaction 1,6-anhydro-N-acetyl-beta-muramate + ATP + H2O = N-acetyl-D-muramate 6-phosphate + ADP + H(+). It functions in the pathway amino-sugar metabolism; 1,6-anhydro-N-acetylmuramate degradation. It participates in cell wall biogenesis; peptidoglycan recycling. Its function is as follows. Catalyzes the specific phosphorylation of 1,6-anhydro-N-acetylmuramic acid (anhMurNAc) with the simultaneous cleavage of the 1,6-anhydro ring, generating MurNAc-6-P. Is required for the utilization of anhMurNAc either imported from the medium or derived from its own cell wall murein, and thus plays a role in cell wall recycling. The protein is Anhydro-N-acetylmuramic acid kinase of Pectobacterium carotovorum subsp. carotovorum (strain PC1).